The following is a 691-amino-acid chain: Probable serine/threonine-protein kinase pXi (691 aa).

The region spanning 18-263 is the Protein kinase domain; it reads YEIGSQIGNG…IDQTLKHPWI (246 aa). ATP-binding positions include 24–32 and K47; that span reads IGNGKFAQV. The active-site Proton acceptor is the D137. 4 disordered regions span residues 314-350, 420-447, 510-536, and 600-620; these read TPIK…ENEN, ENDS…KFTS, QHNN…GNGT, and GGSG…KKDK. Residues 322-336 show a composition bias toward low complexity; the sequence is NNNNNNNNNNNNNNN. The segment covering 338–350 has biased composition (basic and acidic residues); sequence ILDKKSNENENEN. Low complexity-rich tracts occupy residues 423-433, 512-536, and 600-615; these read SSSSETYSSSS, NNNI…GNGT, and GGSG…TGGS. Residues 642–691 adopt a coiled-coil conformation; it reads PKETMDKLASVLSNYKQKNQEKSLKVKYEKQKDKYKKLKSQLKKDKSLLK.

The protein belongs to the protein kinase superfamily. CAMK Ser/Thr protein kinase family.

The catalysed reaction is L-seryl-[protein] + ATP = O-phospho-L-seryl-[protein] + ADP + H(+). It catalyses the reaction L-threonyl-[protein] + ATP = O-phospho-L-threonyl-[protein] + ADP + H(+). The protein is Probable serine/threonine-protein kinase pXi (pXi) of Dictyostelium discoideum (Social amoeba).